The primary structure comprises 480 residues: Probable G-protein coupled receptor Mth-like 6 (480 aa).

The N-terminal stretch at 1–20 (MLLNILAIILVFVISSQSEA) is a signal peptide. The Extracellular portion of the chain corresponds to 21-202 (VIPGCDYFDT…LEHVYIPKSM (182 aa)). Disulfide bonds link C25–C78, C80–C85, C89–C179, and C90–C101. N-linked (GlcNAc...) asparagine glycosylation occurs at N40. N160 and N170 each carry an N-linked (GlcNAc...) asparagine glycan. The chain crosses the membrane as a helical span at residues 203-225 (PAVPQVGTISMVGCILTIAVYLY). At 226–231 (IKKLRN) the chain is on the cytoplasmic side. Residues 232 to 254 (LLGKCFICYVFCKFVQYLIWAGG) form a helical membrane-spanning segment. At 255–263 (DLNLWNNIC) the chain is on the extracellular side. A helical transmembrane segment spans residues 264–283 (SLAGYTNYFFALASHFWLSV). Topologically, residues 284–303 (MSHQIWKNLRLINRDERSYH) are cytoplasmic. Residues 304–326 (FLIYNIYGWGTPAIMTAITYLVD) form a helical membrane-spanning segment. At 327–356 (WAWEDRPDKLNWIPGVGLYRCWINTYDWSA) the chain is on the extracellular side. A helical membrane pass occupies residues 357–379 (MIYLYGPMLILSLFNVVTFILTV). Over 380 to 405 (NHIMKIKSSVKSSTQQQRKCIQNNDF) the chain is Cytoplasmic. Residues 406–428 (LLYLRLSVMMGVTGISEVITYFV) form a helical membrane-spanning segment. Residues 429-437 (KRHKFWRQV) are Extracellular-facing. A helical transmembrane segment spans residues 438–457 (LRVPNFFHLGSGIVVFVLFI). The Cytoplasmic segment spans residues 458–480 (LKRSTFQMIMERISGPRRQQPAS).

It belongs to the G-protein coupled receptor 2 family. Mth subfamily.

It is found in the cell membrane. In Drosophila melanogaster (Fruit fly), this protein is Probable G-protein coupled receptor Mth-like 6 (mthl6).